The primary structure comprises 257 residues: Glycerol-3-phosphate acyltransferase (257 aa).

Transmembrane regions (helical) follow at residues 7 to 27 (IVMA…LIGS), 66 to 86 (ILTL…TYII), 104 to 124 (AILV…PIFF), 140 to 160 (ITVD…ILLI), 164 to 184 (MSLS…VPGI), and 203 to 223 (YVIK…SLLI).

It belongs to the PlsY family. Probably interacts with PlsX.

Its subcellular location is the cell membrane. The enzyme catalyses an acyl phosphate + sn-glycerol 3-phosphate = a 1-acyl-sn-glycero-3-phosphate + phosphate. Its pathway is lipid metabolism; phospholipid metabolism. Its function is as follows. Catalyzes the transfer of an acyl group from acyl-phosphate (acyl-PO(4)) to glycerol-3-phosphate (G3P) to form lysophosphatidic acid (LPA). This enzyme utilizes acyl-phosphate as fatty acyl donor, but not acyl-CoA or acyl-ACP. The polypeptide is Glycerol-3-phosphate acyltransferase (Ureaplasma parvum serovar 3 (strain ATCC 700970)).